Consider the following 760-residue polypeptide: Acetyl-CoA decarbonylase/synthase complex subunit alpha 1 (760 aa).

Residues C56, C59, C60, C62, C67, and C77 each contribute to the [4Fe-4S] cluster site. Position 100 (H100) interacts with CO. Residues H231, C259, and C298 each coordinate [Ni-4Fe-4S] cluster. 4Fe-4S ferredoxin-type domains lie at 381-410 and 418-450; these read KKLQKEAKRCLGCGDCERVCPNDLPIVEAM and FEGLADLFDRCVGCARCESECPTKLRVMNMIED. The [4Fe-4S] cluster site is built by C390, C393, C396, C400, C428, C431, C434, and C438. C496, C525, and C560 together coordinate [Ni-4Fe-4S] cluster.

It belongs to the Ni-containing carbon monoxide dehydrogenase family. Heterotetramer of two alpha and two epsilon subunits. The ACDS complex is made up of alpha, epsilon, beta, gamma and delta subunits with a probable stoichiometry of (alpha(2)epsilon(2))(4)-beta(8)-(gamma(1)delta(1))(8). [4Fe-4S] cluster serves as cofactor. [Ni-4Fe-4S] cluster is required as a cofactor.

It catalyses the reaction CO + 2 oxidized [2Fe-2S]-[ferredoxin] + H2O = 2 reduced [2Fe-2S]-[ferredoxin] + CO2 + 2 H(+). In terms of biological role, part of the ACDS complex that catalyzes the reversible cleavage of acetyl-CoA, allowing autotrophic growth from CO(2). The alpha-epsilon subcomponent functions as a carbon monoxide dehydrogenase. In Methanopyrus kandleri (strain AV19 / DSM 6324 / JCM 9639 / NBRC 100938), this protein is Acetyl-CoA decarbonylase/synthase complex subunit alpha 1.